Reading from the N-terminus, the 87-residue chain is Large ribosomal subunit protein eL31 (87 aa).

It belongs to the eukaryotic ribosomal protein eL31 family.

This Methanosphaerula palustris (strain ATCC BAA-1556 / DSM 19958 / E1-9c) protein is Large ribosomal subunit protein eL31.